Here is a 102-residue protein sequence, read N- to C-terminus: uncharacterized protein (102 aa).

Residues 1–13 (PSSSQALSVPSLS) show a composition bias toward low complexity. A disordered region spans residues 1 to 24 (PSSSQALSVPSLSSEKKTASPTCV).

This is an uncharacterized protein from Human cytomegalovirus (strain AD169) (HHV-5).